A 415-amino-acid chain; its full sequence is Transcription termination factor Rho (415 aa).

Residues 52–119 enclose the Rho RNA-BD domain; that stretch reads ADIASGVLDI…TDVVRVNGRT (68 aa). ATP contacts are provided by residues 161 to 166, 173 to 178, and Arg204; these read GKGQRG and KTGKTV.

This sequence belongs to the Rho family. As to quaternary structure, homohexamer. The homohexamer assembles into an open ring structure.

In terms of biological role, facilitates transcription termination by a mechanism that involves Rho binding to the nascent RNA, activation of Rho's RNA-dependent ATPase activity, and release of the mRNA from the DNA template. In Streptomyces coelicolor (strain ATCC BAA-471 / A3(2) / M145), this protein is Transcription termination factor Rho.